The primary structure comprises 333 residues: uncharacterized protein (333 aa).

Positions 234 to 333 (PPLAPTSAPA…GLSSEFDSDD (100 aa)) are disordered. Residues 251 to 265 (VPPPVPAPPTPPPQE) are compositionally biased toward pro residues. A compositionally biased stretch (polar residues) spans 324–333 (GLSSEFDSDD).

Its subcellular location is the cell projection. It localises to the cilium. The protein resides in the flagellum. This is an uncharacterized protein from Homo sapiens (Human).